The chain runs to 272 residues: Ribonuclease 3 (272 aa).

Residues 1 to 22 (MSLQFLRSEASDGAGETSDASS) form a disordered region. The 132-residue stretch at 31-162 (TATHLARLTG…LVGAIYLDQG (132 aa)) folds into the RNase III domain. E75 lines the Mg(2+) pocket. D79 is an active-site residue. Mg(2+) is bound by residues D148 and E151. The active site involves E151. The region spanning 189–258 (NYKSRLIEYT…AKEAMKRLES (70 aa)) is the DRBM domain.

This sequence belongs to the ribonuclease III family. Homodimer. Requires Mg(2+) as cofactor.

The protein localises to the cytoplasm. The enzyme catalyses Endonucleolytic cleavage to 5'-phosphomonoester.. Functionally, digests double-stranded RNA. Involved in the processing of primary rRNA transcript to yield the immediate precursors to the large and small rRNAs (23S and 16S). Processes some mRNAs, and tRNAs when they are encoded in the rRNA operon. Processes pre-crRNA and tracrRNA of type II CRISPR loci if present in the organism. The protein is Ribonuclease 3 of Chlorobaculum tepidum (strain ATCC 49652 / DSM 12025 / NBRC 103806 / TLS) (Chlorobium tepidum).